A 326-amino-acid polypeptide reads, in one-letter code: Biotin synthase (326 aa).

Residues 42–266 (NEIQLAALLN…LMPKSYVRLA (225 aa)) enclose the Radical SAM core domain. Residues C57, C61, and C64 each coordinate [4Fe-4S] cluster. Positions 101, 132, 192, and 264 each coordinate [2Fe-2S] cluster.

Belongs to the radical SAM superfamily. Biotin synthase family. Homodimer. The cofactor is [4Fe-4S] cluster. Requires [2Fe-2S] cluster as cofactor.

The enzyme catalyses (4R,5S)-dethiobiotin + (sulfur carrier)-SH + 2 reduced [2Fe-2S]-[ferredoxin] + 2 S-adenosyl-L-methionine = (sulfur carrier)-H + biotin + 2 5'-deoxyadenosine + 2 L-methionine + 2 oxidized [2Fe-2S]-[ferredoxin]. Its pathway is cofactor biosynthesis; biotin biosynthesis; biotin from 7,8-diaminononanoate: step 2/2. In terms of biological role, catalyzes the conversion of dethiobiotin (DTB) to biotin by the insertion of a sulfur atom into dethiobiotin via a radical-based mechanism. This chain is Biotin synthase, found in Ehrlichia chaffeensis (strain ATCC CRL-10679 / Arkansas).